The primary structure comprises 178 residues: uncharacterized protein (178 aa).

The next 5 membrane-spanning stretches (helical) occupy residues 1–21, 47–67, 75–95, 117–137, and 158–178; these read MISIYLFMAFFIANLLGYGGG, MLALANALPGPIATKIAAYVG, GFLIALIATVVPSALALIVLL, VIAVMMLILTWQIGADGIKAI, and MHPAFLIIAAFLYGGLVIPYL.

It belongs to the chromate ion transporter (CHR) (TC 2.A.51) family.

It localises to the cell membrane. This is an uncharacterized protein from Bacillus subtilis (strain 168).